A 643-amino-acid polypeptide reads, in one-letter code: Pescadillo homolog (643 aa).

The BRCT domain occupies 319 to 412; it reads KLKTLFKGLK…RLLPTNKYFM (94 aa). Disordered stretches follow at residues 437–475, 492–571, and 609–643; these read AARKAAEGEEEEETFEPAEVNADHEHISDDEEVQDPENE, TDSL…YREN, and DKNARLLANKRERIEKQKRAEQMEKQKQQRKQILA. A compositionally biased stretch (acidic residues) spans 464–475; sequence SDDEEVQDPENE. Over residues 492–518 the composition is skewed to basic and acidic residues; the sequence is TDSLNSGKKEGADDATDNGKDAAEKKQ. The segment covering 524-544 has biased composition (acidic residues); it reads GESDDEDEEEEDDDDGEEEED. The stretch at 569–643 forms a coiled coil; that stretch reads RENEAEKKIV…QKQQRKQILA (75 aa). Positions 609–635 are enriched in basic and acidic residues; it reads DKNARLLANKRERIEKQKRAEQMEKQK.

This sequence belongs to the pescadillo family.

It localises to the nucleus. The protein localises to the nucleolus. The protein resides in the nucleoplasm. Its function is as follows. Required for maturation of ribosomal RNAs and formation of the large ribosomal subunit. This is Pescadillo homolog from Anopheles gambiae (African malaria mosquito).